Reading from the N-terminus, the 55-residue chain is Large ribosomal subunit protein bL33 (55 aa).

Belongs to the bacterial ribosomal protein bL33 family.

In Deinococcus geothermalis (strain DSM 11300 / CIP 105573 / AG-3a), this protein is Large ribosomal subunit protein bL33.